The sequence spans 979 residues: MSASRRESEPKEAETSPEAGGAASDRRRSKTSRACDQCREKKTRCDFSDERPICSACQRMGKTCTFERVPMKRGPTKGYTRNSEPPEGFDTSRRGSRKRSSSDVFKGDAGRPRADPVSLPPLAQYLPQSGSQPRLQPLLAPGAQPQQQFWKVPYYEYQHQRRGSIDSLGSDVSNRNGSEQLAYLPSNASSGSQFYPASQAQYASQLPSDVEGANPEDCRGSLSLPAIQKFQQPPSGYYLQYPYSQFSMLPQQQQQQQQQNAQQSYFTSQYVPPAAPPGAEHFKEFDEGFHSRKGSDVSVAVSPSSPVQVTRTQQAGLNSESRDTNTATAVSPKPLPKPSKPQMQTERSSSKSDGNHNGPRKQKRKNSNRNKPGSQSSIESIASSSHASIIYGKIPDKQLIDIYFEFIHPNFPVIPINKETLTDDLLLVNTQPISPVHELNTYILHWFRNSLELLVRVALKKPSGSGQAYSDGAVDILDSQATFINALNECFQRIVDIHPGLRENEKLLSLKTKFIYLATFSILNYILAFVGYDNSFVLGMSVTIYNECKLYRYLMYDELPSNDTEASENEDEAGAGDAHASGTPERGKSAKHDLGHQVLFKRLYVLLVVFDSLQSCAFGVPKLISVPLAELTEETFKFSTGKWCVERDPQRFETIRQSLVLGQVLSWLSISRKSVRRNSLQAAPQDASWKDEKSDSVSSSLFAKFLVQKHEMMEDFLLLAPLENSSHLLTFDLLSKSSTAICGLISSMHRLLALLMKINPTNSVDPNNRPPLRQGDFVHTDTEIQSESSNPPAATAAPDSCDADKFDVYRKLLGLNGGQERHVAQGTISPFVISIVVEIRNVLELVKHLPTSIIGVVVNLLPNGEGENYQKRSHRLVMSLSNAMNELVQITSLISLLKPFKMFDHTLRSNRPSAKVSTKLLRQKFAPESVKTPSSQPPSSSPGPNSDGSNNTSLSQNTVMHAILDAAWDLMDGEELGWL.

Composition is skewed to basic and acidic residues over residues Met-1 to Glu-14, Asp-36 to Phe-47, and Phe-105 to Ala-114. 6 disordered regions span residues Met-1–Phe-47, Thr-65–Gly-142, Ile-165–Arg-219, Leu-249–Ser-380, Asp-563–Ala-590, and Ala-926–Leu-954. The zn(2)-C6 fungal-type DNA-binding region spans Cys-35 to Cys-64. Residues Gln-132–Gly-142 are compositionally biased toward low complexity. Polar residues-rich tracts occupy residues Ser-170 to Glu-179 and Ser-186 to Pro-207. Over residues Gln-251–Gln-263 the composition is skewed to low complexity. The span at Glu-280–Ser-295 shows a compositional bias: basic and acidic residues. Over residues Asp-296–Val-309 the composition is skewed to low complexity. Positions Thr-310–Ala-329 are enriched in polar residues. Residues Gly-358–Asn-368 show a composition bias toward basic residues. The span at Arg-369–Ser-380 shows a compositional bias: low complexity. Residues Glu-565 to Gly-574 show a composition bias toward acidic residues. The span at Pro-942–Ser-953 shows a compositional bias: low complexity.

This sequence belongs to the EDS1/RGT1 family.

The protein resides in the nucleus. It is found in the cytoplasm. In terms of biological role, glucose-responsive transcription factor that regulates expression of several glucose transporter (HXT) genes in response to glucose. In the absence of glucose, it functions as a transcriptional repressor, whereas high concentrations of glucose cause it to function as a transcriptional activator. In cells growing on low levels of glucose, has a neutral role, neither repressing nor activating transcription. The protein is Glucose transport transcription regulator RGT1 (RGT1) of Lachancea thermotolerans (strain ATCC 56472 / CBS 6340 / NRRL Y-8284) (Yeast).